Consider the following 234-residue polypeptide: Sugar fermentation stimulation protein A (234 aa).

The segment at residues L201–S220 is a DNA-binding region (H-T-H motif).

The protein belongs to the SfsA family.

Binds to DNA non-specifically. Could be a regulatory factor involved in maltose metabolism. In Shigella flexneri serotype 5b (strain 8401), this protein is Sugar fermentation stimulation protein A.